The primary structure comprises 745 residues: AMP deaminase 1 (745 aa).

The residue at position 79 (Thr-79) is a Phosphothreonine. Ser-83 carries the post-translational modification Phosphoserine. Position 214 is a phosphotyrosine (Tyr-214). Positions 301 and 303 each coordinate Zn(2+). Substrate is bound by residues His-303 and 372-377 (KFNDKY). Ser-439 is modified (phosphoserine). His-570 contacts Zn(2+). Glu-573 is a substrate binding site. Catalysis depends on His-592, which acts as the Proton acceptor. Residue Asp-647 participates in Zn(2+) binding. 648 to 651 (DPMQ) is a binding site for substrate.

This sequence belongs to the metallo-dependent hydrolases superfamily. Adenosine and AMP deaminases family. As to quaternary structure, homotetramer. The cofactor is Zn(2+).

The enzyme catalyses AMP + H2O + H(+) = IMP + NH4(+). It participates in purine metabolism; IMP biosynthesis via salvage pathway; IMP from AMP: step 1/1. Its function is as follows. AMP deaminase plays a critical role in energy metabolism. The protein is AMP deaminase 1 of Mus musculus (Mouse).